The primary structure comprises 169 residues: S-ribosylhomocysteine lyase (169 aa).

Residues His-54, His-58, and Cys-128 each contribute to the Fe cation site.

It belongs to the LuxS family. As to quaternary structure, homodimer. It depends on Fe cation as a cofactor.

It catalyses the reaction S-(5-deoxy-D-ribos-5-yl)-L-homocysteine = (S)-4,5-dihydroxypentane-2,3-dione + L-homocysteine. In terms of biological role, involved in the synthesis of autoinducer 2 (AI-2) which is secreted by bacteria and is used to communicate both the cell density and the metabolic potential of the environment. The regulation of gene expression in response to changes in cell density is called quorum sensing. Catalyzes the transformation of S-ribosylhomocysteine (RHC) to homocysteine (HC) and 4,5-dihydroxy-2,3-pentadione (DPD). The protein is S-ribosylhomocysteine lyase of Shewanella pealeana (strain ATCC 700345 / ANG-SQ1).